The primary structure comprises 758 residues: Probable C-mannosyltransferase DPY19L2 (758 aa).

Residues 1 to 58 (MRKQGVSSKRLQSSGRSQSKGRRGASLAREPEVEEEMEKSALGGGKLPRGSWRSSPGR) are disordered. Over 1 to 107 (MRKQGVSSKR…ELQARRFSSR (107 aa)) the chain is Nuclear. Positions 7–18 (SSKRLQSSGRSQ) are enriched in low complexity. A helical membrane pass occupies residues 108 to 128 (TTLGIAVFVAILHWLHLVTLF). Over 129–194 (ENDRHFSHLS…INAIKRFHLY (66 aa)) the chain is Perinuclear space. Residues 195–215 (PEVIIASWYCTFMGIMNLFGL) traverse the membrane as a helical segment. Residues 216–241 (ETKTCWNVTRIEPLNEVQSCEGLGDP) are Nuclear-facing. 2 consecutive transmembrane segments (helical) span residues 242–262 (ACFY…LFFM) and 263–283 (YGAY…CFFF). Residues 284 to 296 (NHGEATRVMWTPP) lie on the Nuclear side of the membrane. The helical transmembrane segment at 297-317 (LRESFSYPFLVLQMCILTLIL) threads the bilayer. The Perinuclear space segment spans residues 318 to 343 (RTSSNDRRPFIALCLSNVAFMLPWQF). Residues 344–364 (AQFILFTQIASLFPMYVVGYI) form a helical membrane-spanning segment. The Nuclear segment spans residues 365–371 (EPSKFQK). Residues 372–392 (IIYMNMISVTLSFILMFGNSM) traverse the membrane as a helical segment. The Perinuclear space portion of the chain corresponds to 393-422 (YLSSYYSSSLLMTWAIILKRNEIQKLGVSK). Residues 423 to 443 (LNFWLIQGSAWWCGTIILKFL) form a helical membrane-spanning segment. Topologically, residues 444-488 (TSKILGVSDHIRLSDLIAARILRYTDFDTLIYTCAPEFDFMEKAT) are nuclear. The chain crosses the membrane as a helical span at residues 489–509 (PLRYTKTLLLPVVMVITCFIF). Residues 510 to 533 (KKTVRDISYVLATNIYLRKQLLEH) lie on the Perinuclear space side of the membrane. The chain crosses the membrane as a helical span at residues 534 to 554 (SELAFHTLQLLVFTALAILIM). The Nuclear portion of the chain corresponds to 555–758 (RLKMFLTPHM…NSVYRVLKVN (204 aa)).

It belongs to the dpy-19 family. In terms of assembly, interacts with FAM209. Widely expressed with high expression in testis. Not detectable in ejaculated sperm (at protein level).

The protein resides in the nucleus inner membrane. Probable C-mannosyltransferase that mediates C-mannosylation of tryptophan residues on target proteins. Its function is as follows. Required during spermatogenesis for sperm head elongation and acrosome formation. Also plays a role in acrosome attachment to the nuclear envelope. In Homo sapiens (Human), this protein is Probable C-mannosyltransferase DPY19L2.